Reading from the N-terminus, the 598-residue chain is Elongation factor 4 (598 aa).

Residues 5–187 form the tr-type G domain; that stretch reads ANIRNFSIIA…ALVEFIPAPT (183 aa). Residues 17–22 and 134–137 contribute to the GTP site; these read DHGKST and NKID.

It belongs to the TRAFAC class translation factor GTPase superfamily. Classic translation factor GTPase family. LepA subfamily.

It is found in the cell inner membrane. It catalyses the reaction GTP + H2O = GDP + phosphate + H(+). In terms of biological role, required for accurate and efficient protein synthesis under certain stress conditions. May act as a fidelity factor of the translation reaction, by catalyzing a one-codon backward translocation of tRNAs on improperly translocated ribosomes. Back-translocation proceeds from a post-translocation (POST) complex to a pre-translocation (PRE) complex, thus giving elongation factor G a second chance to translocate the tRNAs correctly. Binds to ribosomes in a GTP-dependent manner. The chain is Elongation factor 4 from Psychrobacter cryohalolentis (strain ATCC BAA-1226 / DSM 17306 / VKM B-2378 / K5).